The primary structure comprises 330 residues: Tryptophan--tRNA ligase (330 aa).

ATP contacts are provided by residues glutamine 10–serine 12 and glycine 18–asparagine 19. The 'HIGH' region motif lies at proline 11 to asparagine 19. Aspartate 133 contributes to the L-tryptophan binding site. ATP contacts are provided by residues glycine 145–aspartate 147, isoleucine 184, and lysine 193–serine 197. Residues lysine 193–serine 197 carry the 'KMSKS' region motif.

The protein belongs to the class-I aminoacyl-tRNA synthetase family. As to quaternary structure, homodimer.

Its subcellular location is the cytoplasm. It catalyses the reaction tRNA(Trp) + L-tryptophan + ATP = L-tryptophyl-tRNA(Trp) + AMP + diphosphate + H(+). Catalyzes the attachment of tryptophan to tRNA(Trp). The chain is Tryptophan--tRNA ligase from Halalkalibacterium halodurans (strain ATCC BAA-125 / DSM 18197 / FERM 7344 / JCM 9153 / C-125) (Bacillus halodurans).